Reading from the N-terminus, the 394-residue chain is RNA demethylase ALKBH5 (394 aa).

Disordered stretches follow at residues M1–G26 and A48–R83. The residue at position 2 (A2) is an N-acetylalanine. K57 participates in a covalent cross-link: Glycyl lysine isopeptide (Lys-Gly) (interchain with G-Cter in ubiquitin). Residues K59–R83 show a composition bias toward basic and acidic residues. S64 and S69 each carry phosphoserine. The stretch at E67–K116 forms a coiled coil. K86 is covalently cross-linked (Glycyl lysine isopeptide (Lys-Gly) (interchain with G-Cter in SUMO1)). At S87 the chain carries Phosphoserine. The residue at position 132 (K132) is an N6-acetyllysine. Y139 is an active-site residue. Residues N193, Y195, and H204 each contribute to the 2-oxoglutarate site. A disulfide bridge connects residues C230 and C267. K235 is modified (N6-acetyllysine). The 2-oxoglutarate site is built by H266 and R277. Residues S298–H394 form a disordered region. A Glycyl lysine isopeptide (Lys-Gly) (interchain with G-Cter in SUMO1) cross-link involves residue K321. Position 325 is a phosphoserine (S325). A Glycyl lysine isopeptide (Lys-Gly) (interchain with G-Cter in SUMO2) cross-link involves residue K328. Residues K328–R349 show a composition bias toward basic and acidic residues. A phosphoserine mark is found at S371 and S384.

It belongs to the alkB family. Monomer. Interacts with RBM33; promoting desumoylation by SENP1 and recruitment to N(6)-methyladenosine-containing mRNAs. Interacts (when acetylated by KAT8) with PSPC1; interaction facilitates recognition of N(6)-methyladenosine (m6A) mRNA. The cofactor is Fe(2+). Post-translationally, phosphorylated at Ser-87 and Ser-325 in response to reactive oxygen species (ROS), promoting sumoylation and inactivation. In terms of processing, acetylated by KAT8 at Lys-235, promoting interaction with PSPC1, thereby facilitating recognition of N(6)-methyladenosine (m6A) mRNA by ALKBH5. Deacetylated at Lys-235 by HDAC7. Sumoylated at Lys-86 and Lys-321 by PIAS4 following phosphorylation at Ser-87 and Ser-325 in response to reactive oxygen species (ROS), inhibiting the RNA demethylase activity. Desumoylated by SENP1; relieving RNA demethylase inhibition, leading to N(6)-methyladenosine-containing mRNAs demethylation. Post-translationally, ubiquitinated at Lys-57 via 'Lys-48'-linked polyubiquitin chain, leading to its degradation by the proteasome. Deubiquitinated at Lys-57 by USP9X, promoting its stabilizazion.

It is found in the nucleus speckle. The enzyme catalyses an N(6)-methyladenosine in mRNA + 2-oxoglutarate + O2 = an adenosine in mRNA + formaldehyde + succinate + CO2. RNA demethylase activity is inhibited following sumoylation. Inhibition is relieved following desumoylation. Its function is as follows. Dioxygenase that specifically demethylates N(6)-methyladenosine (m6A) RNA, the most prevalent internal modification of messenger RNA (mRNA) in higher eukaryotes. Demethylates RNA by oxidative demethylation, which requires molecular oxygen, alpha-ketoglutarate and iron. Demethylation of m6A mRNA affects mRNA processing, translation and export. Can also demethylate N(6)-methyladenosine in single-stranded DNA (in vitro). Required for the late meiotic and haploid phases of spermatogenesis by mediating m6A demethylation in spermatocytes and round spermatids: m6A demethylation of target transcripts is required for correct splicing and the production of longer 3'-UTR mRNAs in male germ cells. Involved in paraspeckle assembly, a nuclear membraneless organelle, by undergoing liquid-liquid phase separation. Paraspeckle assembly is coupled with m6A demethylation of RNAs, such as NEAT1 non-coding RNA. Also acts as a negative regulator of T-cell development: inhibits gamma-delta T-cell proliferation via demethylation of JAG1 and NOTCH2 transcripts. Inhibits regulatory T-cell (Treg) recruitment by mediating demethylation and destabilization of CCL28 mRNAs. In Bos taurus (Bovine), this protein is RNA demethylase ALKBH5 (ALKBH5).